The following is a 2126-amino-acid chain: Serine/threonine-protein kinase WNK1 (2126 aa).

Disordered stretches follow at residues 1–80 (MSDG…FFRR) and 93–202 (LPGL…QQQD). Position 17 is a phosphoserine (Ser17). Positions 48-64 (RTEEYRRRRHTMDKDSR) are enriched in basic and acidic residues. Thr58 is modified (phosphothreonine). Composition is skewed to low complexity over residues 101–111 (PQPSVPAVVPQ) and 127–141 (VASQVSQQPSAAASP). Residues Ser165 and Ser172 each carry the phosphoserine modification. Residues 221-479 (LKFDIEIGRG…IKDLLNHAFF (259 aa)) form the Protein kinase domain. Ser231 serves as a coordination point for ATP. Phe283 and Leu299 together coordinate chloride. ATP is bound by residues 301-304 (TELM) and Lys351. Asp368 (proton acceptor) is an active-site residue. Residues Leu369 and Leu371 each contribute to the chloride site. Phosphoserine; by autocatalysis is present on residues Ser378 and Ser382. Residues 488–555 (ELAEEDDGEK…VCEGDHKTMA (68 aa)) form an autoinhibitory domain region. A compositionally biased stretch (basic and acidic residues) spans 573-588 (QLVREEQEKRKQEESS). Residues 573–865 (QLVREEQEKR…SRHEKTSRPK (293 aa)) are disordered. Positions 593–614 (NEQQASVSQAGIQPLSVASTGI) are enriched in polar residues. The span at 615–626 (PTAPTTSASVST) shows a compositional bias: low complexity. The interval 629–639 (EPEEPEADQHQ) is interaction with KLHL3. Polar residues-rich tracts occupy residues 638–682 (HQQL…GSQH), 695–705 (TVSSIQAQSQP), and 713–733 (SMAQGQNQGQPSSSLAGVLSS). Low complexity predominate over residues 734–746 (QPVQHPQQQGIQP). Residues 750–789 (PQQAVQYSLPQAASSSEGTVQPVSQPQVSAGTQSSTQGVS) show a composition bias toward polar residues. Low complexity predominate over residues 793 to 823 (PPEQTPITQSQPTQPVPLVSSVDSAHSDVAS). The span at 826 to 836 (SDGNENAPSSS) shows a compositional bias: polar residues. A compositionally biased stretch (basic residues) spans 844–865 (TKRHYRKSVRSRSRHEKTSRPK). The RFXV motif 1 signature appears at 1003–1006 (RFIV). Position 1007 is a phosphoserine (Ser1007). Disordered stretches follow at residues 1474–1507 (GQVSTPGTHASAPASTATGAKPGTTPPKPSLTKT) and 1557–1595 (IPVTPAVGPLSTMSSTAVTEAGSQPQKDGTEVHVTASSS). The span at 1477-1496 (STPGTHASAPASTATGAKPG) shows a compositional bias: low complexity. The span at 1567–1583 (STMSSTAVTEAGSQPQK) shows a compositional bias: polar residues. The RFXV motif 2 motif lies at 1604–1607 (RFQV). The interval 1610–1695 (TMDDAQKERK…TKVGRFQVTT (86 aa)) is disordered. The span at 1613–1629 (DAQKERKNRSEDTKSVH) shows a compositional bias: basic and acidic residues. Low complexity predominate over residues 1632–1650 (SSTSESSVLSSSSPESTLV). 2 consecutive short sequence motifs (RFXV motif) follow at residues 1690–1693 (RFQV) and 1702–1705 (RFSV). Residues 1709–1719 (EDKVTELKKEG) are compositionally biased toward basic and acidic residues. Disordered stretches follow at residues 1709–1783 (EDKV…LCSK), 1856–1940 (VIIP…NLYS), and 1952–1990 (SLSAPGQGTSSTNTVGGTVSSQAAQAQPPAMTSSRKGTF). Residue Ser1723 is modified to Phosphoserine. Positions 1738–1747 (PKKEKPELAE) are enriched in basic and acidic residues. Ser1755, Ser1756, Ser1771, Ser1773, Ser1776, and Ser1865 each carry phosphoserine. A compositionally biased stretch (basic residues) spans 1866-1878 (GRRRRPTKSKGSK). Positions 1879–1889 (SSRSSSLGNKS) are enriched in low complexity. Positions 1890-1940 (PQLSGNLSGQSGTSVLNPQQTLHPPGNTPETGHNQLLQPLKPSPSSDNLYS) are enriched in polar residues. Low complexity predominate over residues 1957-1981 (GQGTSSTNTVGGTVSSQAAQAQPPA). The segment at 1985 to 2005 (SRKGTFTDDLHKLVDNWARDA) is amphipathic alpha-helix. A phosphoserine mark is found at Ser2014 and Ser2030. Positions 2076 to 2097 (PFGTQWSGTGGPAPQPLGQFQP) are disordered. Phosphoserine occurs at positions 2114 and 2116.

This sequence belongs to the protein kinase superfamily. Ser/Thr protein kinase family. WNK subfamily. Interacts with WNK3. Interacts with WNK4; inhibiting the activity of WNK4. Interacts with SGK1; promoting its activation. Associates with the mTORC2 complex. Interacts with UVRAG. Interacts (via amphipathic alpha-helix region) with EMC2; promoting the ER membrane protein complex assembly. As to quaternary structure, interacts with isoform 1; inhibiting isoform 1 activity. Mg(2+) is required as a cofactor. In terms of processing, autophosphorylated at Ser-378 and Ser-382, promoting its activity. Autophosphorylation at Ser-382 is inhibited by intracellular calcium. Phosphorylation at Thr-58 increases ability to activate SGK1. Ubiquitinated by the BCR(KLHL3) complex, leading to its degradation. Also ubiquitinated by the BCR(KLHL2) complex. Post-translationally, may be O-glycosylated.

Its subcellular location is the cytoplasm. The protein localises to the nucleus. It is found in the cytoskeleton. It localises to the spindle. The enzyme catalyses L-seryl-[protein] + ATP = O-phospho-L-seryl-[protein] + ADP + H(+). It carries out the reaction L-threonyl-[protein] + ATP = O-phospho-L-threonyl-[protein] + ADP + H(+). Its activity is regulated as follows. Activated in response to hyperosmotic stress: cell shrinkage promotes formation of a membraneless compartment that concentrates WNK1 with its substrates, OXSR1/OSR1 and STK39/SPAK. Activation requires autophosphorylation of Ser-382 and, to a lower extent, Ser-378. Autophosphorylation and subsequent activation is inhibited by increases in intracellular ionic strength: Cl(-) potently inhibits WNK1 kinase activity via direct binding. Also inhibited by K(+) ions. Inhibited by Compound 12 ((5-Chloro-2-(2-((methyl-d3)amino)thiazol-4-yl)- pyridin-4-yl)(4-(4-chlorobenzyl)piperazin-1-yl)methanone). Its function is as follows. Serine/threonine-protein kinase component of the WNK1-SPAK/OSR1 kinase cascade, which acts as a key regulator of blood pressure and regulatory volume increase by promoting ion influx. WNK1 mediates regulatory volume increase in response to hyperosmotic stress by acting as a molecular crowding sensor, which senses cell shrinkage and mediates formation of a membraneless compartment by undergoing liquid-liquid phase separation. The membraneless compartment concentrates WNK1 with its substrates, OXSR1/OSR1 and STK39/SPAK, promoting WNK1-dependent phosphorylation and activation of downstream kinases OXSR1/OSR1 and STK39/SPAK. Following activation, OXSR1/OSR1 and STK39/SPAK catalyze phosphorylation of ion cotransporters SLC12A1/NKCC2, SLC12A2/NKCC1, SLC12A5/KCC2 and SLC12A6/KCC3, regulating their activity. Phosphorylation of Na-K-Cl cotransporters SLC12A2/NKCC1 and SLC12A2/NKCC1 promote their activation and ion influx; simultaneously, phosphorylation of K-Cl cotransporters SLC12A5/KCC2 and SLC12A6/KCC3 inhibit their activity, blocking ion efflux. Also acts as a regulator of angiogenesis in endothelial cells. Also acts independently of the WNK1-SPAK/OSR1 kinase cascade by catalyzing phosphorylation of other substrates, such as SYT2, PCF11 and NEDD4L. Mediates phosphorylation of SYT2, regulating SYT2 association with phospholipids and membrane-binding. Regulates mRNA export in the nucleus by mediating phosphorylation of PCF11, thereby decreasing the association between PCF11 and POLR2A/RNA polymerase II and promoting mRNA export to the cytoplasm. Acts as a negative regulator of autophagy. Required for the abscission step during mitosis, independently of the WNK1-SPAK/OSR1 kinase cascade. WNK1 may also play a role in actin cytoskeletal reorganization. Also acts as a scaffold protein independently of its protein kinase activity: negatively regulates cell membrane localization of various transporters and channels, such as SLC4A4, SLC26A6, SLC26A9, TRPV4 and CFTR. Involved in the regulation of epithelial Na(+) channel (ENaC) by promoting activation of SGK1 in a kinase-independent manner. Probably activates SGK1 by acting as a scaffold protein that promotes the recruitment of SGK1 to the mTORC2 complex in response to chloride, leading to mTORC2-dependent phosphorylation and activation of SGK1. Acts as an assembly factor for the ER membrane protein complex independently of its protein kinase activity: associates with EMC2 in the cytoplasm via its amphipathic alpha-helix, and prevents EMC2 ubiquitination and subsequent degradation, thereby promoting EMC2 stabilization. Kinase-defective isoform specifically expressed in kidney, which acts as a dominant-negative regulator of the longer isoform 1. Does not directly inhibit WNK4 and has no direct effect on sodium and chloride ion transport. Down-regulates sodium-chloride cotransporter activity indirectly by inhibiting isoform 1, it associates with isoform 1 and attenuates its kinase activity. In kidney, may play an important role regulating sodium and potassium balance. Functionally, kinase-defective isoform produced by alternative promoter usage and alternative splicing. The polypeptide is Serine/threonine-protein kinase WNK1 (Rattus norvegicus (Rat)).